The chain runs to 154 residues: Myoglobin-2 (154 aa).

In terms of domain architecture, Globin spans 2–148 (GLSDGEWQLV…FRKDIATKYK (147 aa)). Nitrite is bound at residue H65. Position 65 (H65) interacts with O2. H94 is a binding site for heme b.

Belongs to the globin family. In terms of assembly, monomeric.

It localises to the cytoplasm. The protein localises to the sarcoplasm. It carries out the reaction Fe(III)-heme b-[protein] + nitric oxide + H2O = Fe(II)-heme b-[protein] + nitrite + 2 H(+). The catalysed reaction is H2O2 + AH2 = A + 2 H2O. Monomeric heme protein which primary function is to store oxygen and facilitate its diffusion within muscle tissues. Reversibly binds oxygen through a pentacoordinated heme iron and enables its timely and efficient release as needed during periods of heightened demand. Depending on the oxidative conditions of tissues and cells, and in addition to its ability to bind oxygen, it also has a nitrite reductase activity whereby it regulates the production of bioactive nitric oxide. Under stress conditions, like hypoxia and anoxia, it also protects cells against reactive oxygen species thanks to its pseudoperoxidase activity. This chain is Myoglobin-2 (MB2), found in Stenella attenuata (Pantropical spotted dolphin).